The primary structure comprises 123 residues: Holo-[acyl-carrier-protein] synthase (123 aa).

The Mg(2+) site is built by Asp-8 and Glu-56.

It belongs to the P-Pant transferase superfamily. AcpS family. It depends on Mg(2+) as a cofactor.

Its subcellular location is the cytoplasm. It carries out the reaction apo-[ACP] + CoA = holo-[ACP] + adenosine 3',5'-bisphosphate + H(+). Its function is as follows. Transfers the 4'-phosphopantetheine moiety from coenzyme A to a Ser of acyl-carrier-protein. This chain is Holo-[acyl-carrier-protein] synthase, found in Clostridium botulinum (strain Eklund 17B / Type B).